A 195-amino-acid polypeptide reads, in one-letter code: 3-isopropylmalate dehydratase small subunit (195 aa).

It belongs to the LeuD family. LeuD type 1 subfamily. As to quaternary structure, heterodimer of LeuC and LeuD.

It carries out the reaction (2R,3S)-3-isopropylmalate = (2S)-2-isopropylmalate. Its pathway is amino-acid biosynthesis; L-leucine biosynthesis; L-leucine from 3-methyl-2-oxobutanoate: step 2/4. Its function is as follows. Catalyzes the isomerization between 2-isopropylmalate and 3-isopropylmalate, via the formation of 2-isopropylmaleate. The polypeptide is 3-isopropylmalate dehydratase small subunit (Oenococcus oeni (strain ATCC BAA-331 / PSU-1)).